A 397-amino-acid polypeptide reads, in one-letter code: Argininosuccinate synthase (397 aa).

9–17 (AYSGGLDTS) is a binding site for ATP. Y86 is an L-citrulline binding site. G116 contributes to the ATP binding site. L-aspartate contacts are provided by T118, N122, and D123. L-citrulline is bound at residue N122. Residues R126, S174, E259, and Y271 each contribute to the L-citrulline site.

It belongs to the argininosuccinate synthase family. Type 1 subfamily. In terms of assembly, homotetramer.

Its subcellular location is the cytoplasm. It carries out the reaction L-citrulline + L-aspartate + ATP = 2-(N(omega)-L-arginino)succinate + AMP + diphosphate + H(+). It functions in the pathway amino-acid biosynthesis; L-arginine biosynthesis; L-arginine from L-ornithine and carbamoyl phosphate: step 2/3. This Lactococcus lactis subsp. cremoris (strain SK11) protein is Argininosuccinate synthase.